Consider the following 54-residue polypeptide: Large ribosomal subunit protein bL32c (54 aa).

This sequence belongs to the bacterial ribosomal protein bL32 family.

It is found in the plastid. It localises to the chloroplast. The chain is Large ribosomal subunit protein bL32c from Helianthus annuus (Common sunflower).